Consider the following 280-residue polypeptide: Urease accessory protein UreD 1 (280 aa).

This sequence belongs to the UreD family. As to quaternary structure, ureD, UreF and UreG form a complex that acts as a GTP-hydrolysis-dependent molecular chaperone, activating the urease apoprotein by helping to assemble the nickel containing metallocenter of UreC. The UreE protein probably delivers the nickel.

It localises to the cytoplasm. In terms of biological role, required for maturation of urease via the functional incorporation of the urease nickel metallocenter. The sequence is that of Urease accessory protein UreD 1 from Brucella canis (strain ATCC 23365 / NCTC 10854 / RM-666).